A 257-amino-acid chain; its full sequence is MKAHKIFWLNLAAIIIISIVVSGDMFLAMKWEQIHLKDGLKKVLSTYPIKNLETLYEIDGHDNPHYENNDQDTWYIESSYSVVGSDELLKEDRMLLKVDKNTHKITGEYDTTTNDRKNATDSTYKSYPVKVVNNKIVFTKDVKDPALKQKIENNQFLIQSGDLTSILNSNDLKVTHDPTTDYYNLSGKLSNDNPNVKQLKRRYNIPKNASTKVELKGMSDLKGNNHQDQKLYFYFSSPGKDQIIYKESLTYNKISEH.

The helical transmembrane segment at Ile6–Phe26 threads the bilayer.

It belongs to the staphylococcal tandem lipoprotein family.

The protein localises to the cell membrane. This is an uncharacterized protein from Staphylococcus aureus (strain NCTC 8325 / PS 47).